The chain runs to 385 residues: Succinate--CoA ligase [ADP-forming] subunit beta (385 aa).

The ATP-grasp domain maps to 9 to 237 (KEILRQFGVN…LEAEHPLEIE (229 aa)). Residues Lys-45, 52 to 54 (GRG), Val-94, and Glu-101 each bind ATP. Positions 192 and 206 each coordinate Mg(2+). Residues Asn-257 and 314 to 316 (GIT) each bind substrate.

This sequence belongs to the succinate/malate CoA ligase beta subunit family. Heterotetramer of two alpha and two beta subunits. Requires Mg(2+) as cofactor.

The enzyme catalyses succinate + ATP + CoA = succinyl-CoA + ADP + phosphate. It carries out the reaction GTP + succinate + CoA = succinyl-CoA + GDP + phosphate. The protein operates within carbohydrate metabolism; tricarboxylic acid cycle; succinate from succinyl-CoA (ligase route): step 1/1. In terms of biological role, succinyl-CoA synthetase functions in the citric acid cycle (TCA), coupling the hydrolysis of succinyl-CoA to the synthesis of either ATP or GTP and thus represents the only step of substrate-level phosphorylation in the TCA. The beta subunit provides nucleotide specificity of the enzyme and binds the substrate succinate, while the binding sites for coenzyme A and phosphate are found in the alpha subunit. This Deinococcus deserti (strain DSM 17065 / CIP 109153 / LMG 22923 / VCD115) protein is Succinate--CoA ligase [ADP-forming] subunit beta.